The sequence spans 269 residues: 4-hydroxy-tetrahydrodipicolinate reductase (269 aa).

11 to 16 (GPIGRM) is a binding site for NAD(+). Lys-39 contributes to the NADP(+) binding site. Residues 101 to 103 (GTT) and 125 to 128 (ASNF) contribute to the NAD(+) site. The active-site Proton donor/acceptor is the His-158. His-159 contributes to the (S)-2,3,4,5-tetrahydrodipicolinate binding site. Catalysis depends on Lys-162, which acts as the Proton donor. (S)-2,3,4,5-tetrahydrodipicolinate is bound at residue 168-169 (GT).

Belongs to the DapB family. As to quaternary structure, homotetramer.

The protein localises to the cytoplasm. It carries out the reaction (S)-2,3,4,5-tetrahydrodipicolinate + NAD(+) + H2O = (2S,4S)-4-hydroxy-2,3,4,5-tetrahydrodipicolinate + NADH + H(+). The enzyme catalyses (S)-2,3,4,5-tetrahydrodipicolinate + NADP(+) + H2O = (2S,4S)-4-hydroxy-2,3,4,5-tetrahydrodipicolinate + NADPH + H(+). It functions in the pathway amino-acid biosynthesis; L-lysine biosynthesis via DAP pathway; (S)-tetrahydrodipicolinate from L-aspartate: step 4/4. In terms of biological role, catalyzes the conversion of 4-hydroxy-tetrahydrodipicolinate (HTPA) to tetrahydrodipicolinate. This chain is 4-hydroxy-tetrahydrodipicolinate reductase, found in Buchnera aphidicola subsp. Acyrthosiphon pisum (strain 5A).